The chain runs to 96 residues: Antigen H4 (96 aa).

The segment at 1–20 (EFQEEIKEGVEEHKHEDDPE) is disordered. N-linked (GlcNAc...) asparagine glycosylation occurs at Asn34.

The protein is Antigen H4 (H4) of Toxoplasma gondii.